Consider the following 635-residue polypeptide: Sodium- and chloride-dependent transporter XTRP3B (635 aa).

The interval 1 to 38 is disordered; the sequence is MESPSAHAVSLPEDEELQPWGGAGGPGQHPGRPRSTEC. The Cytoplasmic portion of the chain corresponds to 1 to 56; sequence MESPSAHAVSLPEDEELQPWGGAGGPGQHPGRPRSTECAHPGVVEKVRPKWDNPLQ. The chain crosses the membrane as a helical span at residues 57–77; that stretch reads FLLVCISYAVGLGNVWRFPYL. The Extracellular segment spans residues 78 to 85; that stretch reads CQMYGGGN. The helical transmembrane segment at 86-106 threads the bilayer; sequence FLVPYIIMLIVEGMPLLYLEL. Over 107 to 127 the chain is Cytoplasmic; sequence AVGQRMRQGSIGAWRTISPYL. A helical transmembrane segment spans residues 128 to 148; that stretch reads SGVGIASLVVSFLASVYFNVI. The Extracellular portion of the chain corresponds to 149 to 208; the sequence is NTWALWYLFHSFQDPLPWSVCPLNSNHTGYDEECEKASSTQYFWYRKTLNISPSIQENGG. The N-linked (GlcNAc...) asparagine glycan is linked to Asn174. A helical transmembrane segment spans residues 209–229; sequence VQWEPALCLTLAWLMVYLCIL. Residues 230–237 are Cytoplasmic-facing; the sequence is RGTESTGK. Residues 238-258 traverse the membrane as a helical segment; the sequence is VVYFTTSLPYFVLIIYLVRGL. Residues 259–284 lie on the Extracellular side of the membrane; sequence TLHGATNGLAYMFTPKIEQLANPKAW. Residues 285 to 305 traverse the membrane as a helical segment; that stretch reads INAATQIFFSLGLGCGGLIAF. The Cytoplasmic segment spans residues 306 to 319; it reads ASYNEPSNDCQKHA. The chain crosses the membrane as a helical span at residues 320 to 340; the sequence is LIVSVINSTTAIFSSIVTFSI. Topologically, residues 341-432 are extracellular; it reads YGFKATFNYE…EAIKNMEVSQ (92 aa). N-linked (GlcNAc...) asparagine glycosylation is present at Asn400. Residues 433–453 traverse the membrane as a helical segment; that stretch reads LWSVLYFFMLLTLGMGSMVGT. Residues 454-474 are Cytoplasmic-facing; sequence GTAILTPLTDSKIISSYLPKE. Residues 475-495 form a helical membrane-spanning segment; sequence AISGLVCLLNCAIGMVFTMEA. The Extracellular portion of the chain corresponds to 496–508; sequence GNYWFDLFNDYTA. Residues 509 to 529 traverse the membrane as a helical segment; the sequence is TLSLLLIVLVETIAVCYVYGL. Residues 530-547 are Cytoplasmic-facing; that stretch reads KRFESDLRAMTGRTLSWY. A helical transmembrane segment spans residues 548-568; it reads WKVMWAFVSPLLIVGLFIFYL. Over 569-597 the chain is Extracellular; it reads SDYILTGTLQYQAWDATQGHVVTKDYPTY. Residues 598–618 form a helical membrane-spanning segment; that stretch reads ALAVIGLLVASSTMCIPLVAL. The Cytoplasmic portion of the chain corresponds to 619 to 635; sequence GTFVTRHFKIREQFSAA.

This sequence belongs to the sodium:neurotransmitter symporter (SNF) (TC 2.A.22) family. SLC6A20 subfamily. Interacts with CLTRN. In terms of tissue distribution, detected only in kidney and lung.

It is found in the apical cell membrane. Does not show transporter activity with a range of tested amino acids including proline, glutamine, glutamic acid, leucine, alanine, histidine, glycine and arginine. This Mus musculus (Mouse) protein is Sodium- and chloride-dependent transporter XTRP3B (Slc6a20b).